Reading from the N-terminus, the 5146-residue chain is MLLPALLFGAAWALANGRWCEQTETVLVEEEVTPHQEDLVPCASLQHYQRRGWRLDLTWSGRAGLCAIYKPPETRPAAWNRTVRACCPGWGGTHCTLALAEASPEGHCFATWLCNLGAGSVNASAGSLEECCAQPWGHSWRDGRSQTCHSCSNHSRLGSTPSPAILQPLAGAVAQLWSQRQRPSATCATWSGFHYRTFDGRHFHFLGRCTYLLAGAADATWAVHLQPMGHCPQPGHCQLARVMMGPEEVLIRGENVTVNGRLVPEGASQLLPGLSLQWQGDWLVLSGGLGVVVRLDRSSSVSISVDQELQGQTQGLCGVYNGQPEDDFLEPGRGLAALAATFGNSWRLPDSELGCLDAVEAAQGCEDPLRGTETGTEAGQLRAEAQDVCHQLLEGPFRECHTQVPPAEYHEACLFAYCAGAPAGSGRAERLEAVCATLASYAQDCAARRIAVRWRKPGFCERLCPGGQLYSDCASACPPSCSAVGEGSEWSCGEECVSGCECPPGLFWDGALCVPAARCPCYRRRRRYEPGDTVRQLCNPCECRDGRWLCAQAPCAAECAVGGDGHYVTFDGRSFSFRGRAGCRFILVQDFAKRQLLIVLEHGDCDAGSCLHAISVSLGDTLVQLRDSGVVLVDGQDVALPWSAAGGLSVSRASSSFLLLRWPGARILWGVSDPAAYITLDPHHAHQVQGLCGTFTRNQQDDFLTPAGDVETSITAFASKFQVAGGGTCSLEACTPLSPCSTHTERQVFAEVACAILHGPTFQECHGLVDREAFHLRCLAAVCGCTPGRDCLCPVLAAYARRCAQEGALPSWRNQTFCPVLCPGGQEYQECAPACDRNCGEPEDCGELDNCVAGCNCPLGLLWDPEGQCVPPNLCPCQLGAHRYAPGSATMKDCNHCVCQERGLWNCTAHHCAPPRTFCPRELVYVPGACLLTCDSLDADRTCPPGSPGGCVCPPGTVLLEERCVPPELCPCRHGGQWYLPNAAIQEDCNLCVCQGQQWHCTGQRCDGRCRASGAPHYVTFDGLALTFPGACEYLLVREASGQFMVSAQNLPCGASGLTCTKALTVRLQGTVVHMLRGRAVMVNGVSVTPPKVYSGPGLSLHTAGLFLLLSTRLGLTLLWDGGTRVPVQLSPQLRGRVAGLCGDFDGDASNDLRSRQGVLEPTAELAAHSWRLGPLCPEPGDLPHPCAVNAHRAGWARARCGVVLQPLFARCHVEVPPQQHYEQCVYDACGCDSGGDCECLCSAIATYADECARHGIHVRWRSQELCPLQCERGQVYEACGPTCPATCHDHRPEPGWPCRAVACVEGCFCPEGTLLHGGVCLEPAACPCEWGGSFFPPGTVLQKDCGNNCTCRESQWLCGDDGGRCVEPGPGCAEGETPCRESGHCVPHGWLCDNQDDCGDGSDEEGCATRVCGEGQVSCCSGRCLPLVLLCDGQDDCGDGMDEQGCPCPQDSLTCADGHCLPPARLCDGHPDCPDGADEESCLGQVDCAPGEVSCVDGTCLGAIQLCDGVWDCLDGGDEGPGHCPLPSLPTPPAGTLPGPSAVSWKLHLPPWPVSALRLPCGPLDFACGSGECAPRGWRCDGEEDCADGSDESGCDRPCAPHHAPCARGSHCVAAEQLCDGVPHCPDGSDEDPGACERLQAPGGPNRTGLPCPEYSCPDGLCIGFQQVCDGQPDCELAGTAGPSPEEQGCGAWGPWSPWELCSRTCGPGVQGWSRRCSPPSLPVLWHCPGPERQTRACFAAACPEDGVWTSWSRWSPCSEPCGGVTARHRECHPPQNGGRTCATLPGGPPSTRETRPCPQDGCPNVTCSGELVFHACVPCPLTCDDISGQATCPPDRPCGGPGCWCPAGQVLGAQGRCVWPRQCPCLVDGSRYWPGQRVKTDCQLCVCQDGRPRRCQPSLDCAVNCGWSAWSPWAECLGPCGSRSVQWSFRSPNNPRPAGRGHQCRGLHRKARRCQTEPCEGCEQDGRVHRVGERWRAGPCRVCQCLHDGSARCSPYCPLGSCPQDWVLVEGVGESCCHCVPPGENQTVHPMATPVPAPTPSPQIGAPLITYLLPPPGDPCYSPLGLARLPEGSLPASSQQLEHPAWAAILRPAPGAPGWSPVEHADTQGHTPPPYLQLDLLQPRNLTGIIVQGAGSSDWLQVSSDGLHWHSYRDIQHGTQPAPQLFPKNWNGPSTVWMFARMVQARHVRVWPSDGHHQAAPSSDANLDGPLRVELLGCEPAPLCLGVGHRCVSGECAPRGAPCDGVEDCKDGSDEEGCVTPPAGAGRIESTAWSSAPSSAQPGQLPPQPSEGLAEAEADHWHPGRGSPVPPTGKGPASLGSEPHPSPGGSVQTVTPTSQPEAQALRPEMAAVTVLPPHPMVTPEVPAGRSTTPGPFPHVQCSPGQVPCEVLGCVELEQLCDGREDCLDGSDERPCAWAAGTVPFTVPTTTLPGLPASRDLCSPSQLTCGSGECLPVERRCDLQLDCQDGSDENGCVDCGLAPWSGWSSCSRSCGLGLAFQRRELLRPPLPGGSCPPDRLRSQPCFVQACPVAGAWAEWEAWGPCSVSCGGGHRSRRRSCMDPPPKNGGAPCPGPPQERAPCGLQPCAGGTDCGQGRVHVSAELCRKGLVPPCPPSCLDPEANRSCSGLCLEGCRCPPGLLLQDAGCLPLSECPCLVGEELQQPGVPFLLDNCSRCVCEKGALLCEPGGCPVPCGWSAWSSWGPCDRSCGSGLRARFRSPSNPPAASGGAPCEGQRQELQACYSACGAEVPGWTPWAPWSACSQSCLVPGGGPALRSRSRLCPGPGDTSCIGEATEEEPCSPPVCLGLGVWGQWAAWSACSAPCNGGVQTRGRRCSASAPGDPGCQGPHSQTRDCNTQPCTAQCPGDMVFRSAEQCRWEGGPCPGLCLARGPGVECTGVCTAGCACPTGLFLHNSSCLPPSQCPCQLRGQLYAPGAVARLDSCSNCTCISGEMVCASEPCPVACGWSPWTPWSLCSRSCNVGVRRRFRAGTAPPAAFGGAACQGPNMEAEFCSLRPCGGPAGEWGPWSPCSVPCGGGYRNRTRGSSGPSPVDFSTCGLQPCAGPAPGVCPPGKRWLDCAQGPASCAELSAPRGADQPCHPGCYCPSGMLLLNNACVPTQDCPCTHGGRLHPPGSAVLRPCENCSCVSGLITNCTSWPCKEGQPTWSPWTPWSECSASCGPARRHKHRFCTRPPGGAPSSMAPPLLLSSVPPLCPGPEAEEEPCLLPECDRAGGWGPWGPWSSCSRSCGGGLRSRSRACDQPPPQGLGDYCEGPRAQGAACQALPCPVTNCTAIEGAEYSACGPPCPRSCDDLVHCVWHCQPGCYCPPGQVLSADGTVHVQPGHCSCLDLLTGERHRPGAQLAKPDGCNYCTCSEGQLTCTDLPCPVPGAWCPWSEWTACSQPCQGQTRTRSRACSCPAPQHGGAPCPGEAGEAGAQHQRETCASTPECPVDGAWSPWGPWSPCEVCLGRSHRSRECSWPPTSEGGRPCPGGHRQSRPCQGNSTQCTDCAGGQDLLPCGQPCPRSCEDLSPGVECQPDSMGCQQPRCGCPPGQLSQDGLCVTPSQCRCQYQPGAMGIPENQSRSAGSGLSSWESLEPGEVVTGPCDNCTCVAGILQCQEVPACSGLGLWGSWGPWEDCSVSCGGGEQLRFRRCPRPPCPGPARQSRTCRTQVCREAGCPAGRLYRECQPSEGCPFSCAHVTGQVGCFSAGCEEGCHCPEGTFLHRSACVQECPCVLTALWLQGLGAAGADPGAHLSVLGENGQPLGPGDELGSGQSLRTGCHNCSCAHGKLSCSVEACSKAAGGFSPWGPWGPCSRSCGGLGTRTRSRQCVRPMPAPGGQGCHGPHWDLEYCPSPECPGAAGSTAEPATGLPGGWGLWSPWSPCSGTCTDPAHPAWRSRSRLCLANCTGGAASQERPCNLPSCTELPLCPGPGCEAGNCSWTAWAPWEPCSRSCGVGQQRRLRAYHPPGPGGHWCPDVLTAYQERRFCNLRACPVPGGWSRWSPWSWCDRSCGGGRSLRSRSCSSPPPKNGGAPCVGERHHARLCNPTPCEEGCPAGMEVVSCANRCPRRCSDLQEGIVCQEDQACQQGCRCPEGSLEQDGGCVPLGHCECTDAQGHSWAPGSQHQEACNNCTCRAGQLSCTAQPCPPPAHCAWSRWSAWSPCSRSCGPAGQQSRFRSSTSGSWAPECREEQSQSQPCPQSPCPPLCLQGTRPRSLGDSWLQDGCQQCSCTPEGIICEDAECAGLGAWTPWSPWSDCPVSCGGGNQVRTRVCVASAPPRGGSPCLGPDVQSQRCGLWPCPALPDTCSWGPWGPCSRSCGPGLASRSASCPCLLAEAEPACNSTSPRLDTQACYAGPCLEECVWSSWSSWTRCSCEVLVQQRYRHQRPAPGGAGAGPPCTRLDGHFRPCLTGNCSEDSCAPPFEFQACGSPCTGLCATYLSPWLCQDLPPCQPGCYCPEGLLEQAGGCVPPEQCNCQHVSGEGAGVTLAPGDRLQLGCKECECQRGELQCTSQGCQGLLPLSGWSEWSPCGPCLPLGLLAPASRAALEERWPQDTAGLSPTSAPTLASEQHRHRLCLDPETGRPWAGDPDLCTVPLSQQRLCPDPGACQDLCQWGPWGAWSPCQVPCSGGFRLRWREAGIPPGGGCRGPWAQTESCNMGPCPGESCEAQDTVPTPDCANQCPRSCVDLWDRVECLQGPCRPGCRCPPGQLVQDGHCVPVSSCRCGLPSPNASWALAPAEVVRLDCRNCTCVNGSLACSSHECPTLGPWSAWSNCSAPCGGGTTKRHRSCKEGPGVTPCQAQDMEQQQDCNLQPCPECPPGQVLSACAVSCPRLCSHLQPGTPCMQEPCQLGCDCPRGQLLHNGTCVPPAECPCTQLSLPWGLTLTLEEQHRELPPGTLLTQNCTHCICQGGAFSCSLTDCQECPPGETWQQVAPGELGPCEQTCREPNATETQGNCSGRQAPGCVCQRGHFRSQEGPCVPVDLCECWHHGRPHPPGSEWQKACESCRCVSGESICTQHCPPLTCAQGETAVQEPGGCCPTCRQEAPEEQPVSCRHLTELRNLTKGACYLEQVEVNYCSGHCPSSTNVLPEEPYLQSQCDCCSYRLDPENPVRILNLRCPGGRTELVVLPVIHSCQCSACQGGDFSER.

An N-terminal signal peptide occupies residues 1–17 (MLLPALLFGAAWALANG). The 77-residue stretch at 18–94 (RWCEQTETVL…ACCPGWGGTH (77 aa)) folds into the EMI domain. 3 N-linked (GlcNAc...) asparagine glycosylation sites follow: N80, N122, and N153. Residues 185-356 (ATCATWSGFH…RLPDSELGCL (172 aa)) enclose the VWFD 1 domain. 3 disulfides stabilise this stretch: C187–C317, C209–C355, and C231–C237. N255 carries an N-linked (GlcNAc...) asparagine glycan. One can recognise a TIL 1 domain in the interval 464–519 (CPGGQLYSDCASACPPSCSAVGEGSEWSCGEECVSGCECPPGLFWDGALCVPAARC). One can recognise a VWFD 2 domain in the interval 557-730 (AECAVGGDGH…FQVAGGGTCS (174 aa)). Cystine bridges form between C559–C692 and C583–C729. N-linked (GlcNAc...) asparagine glycosylation is present at N814. The 54-residue stretch at 822 to 875 (CPGGQEYQECAPACDRNCGEPEDCGELDNCVAGCNCPLGLLWDPEGQCVPPNLC) folds into the TIL 2 domain. N906 carries N-linked (GlcNAc...) asparagine glycosylation. Residues 1008-1178 (GRCRASGAPH…HSWRLGPLCP (171 aa)) enclose the VWFD 3 domain. Intrachain disulfides connect C1010-C1142, C1032-C1177, and C1053-C1060. The region spanning 1271–1327 (CERGQVYEACGPTCPATCHDHRPEPGWPCRAVACVEGCFCPEGTLLHGGVCLEPAAC) is the TIL 3 domain. N1349 carries an N-linked (GlcNAc...) asparagine glycan. LDL-receptor class A domains are found at residues 1372–1409 (GCAEGETPCRESGHCVPHGWLCDNQDDCGDGSDEEGCA), 1412–1447 (VCGEGQVSCCSGRCLPLVLLCDGQDDCGDGMDEQGC), 1448–1484 (PCPQDSLTCADGHCLPPARLCDGHPDCPDGADEESCL), 1488–1526 (DCAPGEVSCVDGTCLGAIQLCDGVWDCLDGGDEGPGHCP), 1561–1597 (PCGPLDFACGSGECAPRGWRCDGEEDCADGSDESGCD), and 1599–1638 (PCAPHHAPCARGSHCVAAEQLCDGVPHCPDGSDEDPGACE). 18 disulfides stabilise this stretch: C1373–C1386, C1380–C1399, C1393–C1408, C1413–C1425, C1420–C1438, C1432–C1447, C1449–C1461, C1456–C1474, C1468–C1483, C1489–C1501, C1496–C1514, C1508–C1525, C1562–C1574, C1569–C1587, C1581–C1596, C1600–C1613, C1607–C1626, and C1620–C1637. Residue N1647 is glycosylated (N-linked (GlcNAc...) asparagine). One can recognise an LDL-receptor class A 7 domain in the interval 1652-1690 (PCPEYSCPDGLCIGFQQVCDGQPDCELAGTAGPSPEEQG). TSP type-1 domains lie at 1691–1745 (CGAW…AACP) and 1747–1805 (DGVW…DGCP). 3 cysteine pairs are disulfide-bonded: C1703–C1739, C1707–C1744, and C1718–C1729. N-linked (GlcNAc...) asparagine glycosylation occurs at N1806. A TIL 4 domain is found at 1809–1865 (CSGELVFHACVPCPLTCDDISGQATCPPDRPCGGPGCWCPAGQVLGAQGRCVWPRQC). EGF-like domains follow at residues 1821–1860 (CPLTCDDISGQATCPPDRPCGGPGCWCPAGQVLGAQGRCV) and 1861–1898 (WPRQCPCLVDGSRYWPGQRVKTDCQLCVCQDGRPRRCQ). Residues 1906–1962 (NCGWSAWSPWAECLGPCGSRSVQWSFRSPNNPRPAGRGHQCRGLHRKARRCQTEPCE) enclose the TSP type-1 3 domain. 3 disulfides stabilise this stretch: C1907-C1946, C1918-C1922, and C1956-C1961. Residues 1962 to 2022 (EGCEQDGRVH…GVGESCCHCV (61 aa)) enclose the VWFC 1 domain. Residues N2027 and N2127 are each glycosylated (N-linked (GlcNAc...) asparagine). Disulfide bonds link C2062–C2220, C2226–C2238, C2233–C2251, and C2245–C2260. Residues 2062–2220 (CYSPLGLARL…GPLRVELLGC (159 aa)) enclose the F5/8 type C domain. The LDL-receptor class A 8 domain occupies 2225–2261 (LCLGVGHRCVSGECAPRGAPCDGVEDCKDGSDEEGCV). The tract at residues 2262-2346 (TPPAGAGRIE…TPTSQPEAQA (85 aa)) is disordered. Polar residues-rich tracts occupy residues 2273–2284 (TAWSSAPSSAQP) and 2331–2343 (GSVQTVTPTSQPE). LDL-receptor class A domains follow at residues 2382-2418 (QCSPGQVPCEVLGCVELEQLCDGREDCLDGSDERPCA) and 2442-2478 (LCSPSQLTCGSGECLPVERRCDLQLDCQDGSDENGCV). 12 cysteine pairs are disulfide-bonded: C2383–C2395, C2390–C2408, C2402–C2417, C2443–C2455, C2450–C2468, C2462–C2477, C2480–C2516, C2491–C2495, C2526–C2531, C2546–C2583, C2550–C2588, and C2561–C2573. TSP type-1 domains lie at 2479-2532 (DCGL…QACP) and 2534-2589 (AGAW…QPCA). A TIL 5 domain is found at 2611-2654 (VPPCPPSCLDPEANRSCSGLCLEGCRCPPGLLLQDAGCLPLSEC). N2624 and N2673 each carry an N-linked (GlcNAc...) asparagine glycan. TSP type-1 domains follow at residues 2694 to 2748 (PCGW…SACG), 2751 to 2807 (VPGW…PVCL), and 2809 to 2862 (LGVW…QPCT). 9 disulfide bridges follow: C2695–C2733, C2706–C2710, C2743–C2747, C2763–C2801, C2767–C2806, C2783–C2791, C2821–C2856, C2825–C2861, and C2836–C2846. Residues N2915 and N2946 are each glycosylated (N-linked (GlcNAc...) asparagine). TSP type-1 domains follow at residues 2964 to 3019 (ACGW…RPCG) and 3020 to 3071 (GPAG…GVCP). 3 disulfide bridges follow: C2965–C3003, C2976–C2980, and C3013–C3018. A glycan (N-linked (GlcNAc...) asparagine) is linked at N3041. The region spanning 3070 to 3122 (CPPGKRWLDCAQGPASCAELSAPRGADQPCHPGCYCPSGMLLLNNACVPTQDC) is the TIL 6 domain. N-linked (GlcNAc...) asparagine glycosylation is found at N3143 and N3153. TSP type-1 domains are found at residues 3163-3230 (QPTW…PECD) and 3232-3287 (AGGW…LPCP). 6 disulfide bridges follow: C3175-C3224, C3179-C3229, C3190-C3214, C3244-C3281, C3248-C3286, and C3259-C3271. An N-linked (GlcNAc...) asparagine glycan is attached at N3290. Residues 3295-3345 (EGAEYSACGPPCPRSCDDLVHCVWHCQPGCYCPPGQVLSADGTVHVQPGHC) form the TIL 7 domain. 2 TSP type-1 domains span residues 3388-3450 (PGAW…PECP) and 3452-3507 (DGAW…TQCT). 6 disulfide bridges follow: C3400-C3443, C3404-C3449, C3415-C3427, C3464-C3499, C3467-C3506, and C3477-C3489. 3 N-linked (GlcNAc...) asparagine glycosylation sites follow: N3502, N3580, and N3607. Positions 3626-3674 (LGLWGSWGPWEDCSVSCGGGEQLRFRRCPRPPCPGPARQSRTCRTQVCR) constitute a TSP type-1 15 domain. Disulfide bonds link C3638–C3668, C3642–C3673, and C3653–C3658. N-linked (GlcNAc...) asparagine glycosylation occurs at N3783. TSP type-1 domains lie at 3802-3858 (AGGF…PECP), 3872-3924 (PGGW…PSCT), 3938-3994 (NCSW…RACP), and 3996-4051 (PGGW…TPCE). 3 disulfides stabilise this stretch: C3814/C3852, C3818/C3857, and C3830/C3842. N-linked (GlcNAc...) asparagine glycans are attached at residues N3906 and N3938. Intrachain disulfides connect C3939–C3975, C3950–C3954, C3988–C3993, C4008–C4045, C4012–C4050, and C4023–C4035. Residues 4054–4109 (CPAGMEVVSCANRCPRRCSDLQEGIVCQEDQACQQGCRCPEGSLEQDGGCVPLGHC) form the TIL 8 domain. The region spanning 4101–4168 (GGCVPLGHCE…AWSPCSRSCG (68 aa)) is the VWFC 2 domain. An N-linked (GlcNAc...) asparagine glycan is attached at N4131. 4 TSP type-1 domains span residues 4151-4204 (HCAW…SPCP), 4245-4300 (LGAW…WPCP), 4302-4358 (LPDT…GPCL), and 4360-4414 (ECVW…GNCS). Intrachain disulfides connect C4152–C4188, C4163–C4167, C4198–C4203, C4257–C4294, C4261–C4299, and C4272–C4284. N-linked (GlcNAc...) asparagine glycosylation is present at N4341. Intrachain disulfides connect C4361–C4398, C4372–C4374, and C4408–C4413. N-linked (GlcNAc...) asparagine glycosylation is present at N4412. Positions 4418–4473 (CAPPFEFQACGSPCTGLCATYLSPWLCQDLPPCQPGCYCPEGLLEQAGGCVPPEQC) constitute a TIL 9 domain. The 52-residue stretch at 4610–4661 (LCQWGPWGAWSPCQVPCSGGFRLRWREAGIPPGGGCRGPWAQTESCNMGPCP) folds into the TSP type-1 24 domain. Intrachain disulfides connect C4611-C4645, C4622-C4626, and C4655-C4660. Residues 4675–4721 (DCANQCPRSCVDLWDRVECLQGPCRPGCRCPPGQLVQDGHCVPVSSC) form the TIL 10 domain. Residues N4729, N4746, N4751, and N4772 are each glycosylated (N-linked (GlcNAc...) asparagine). The TSP type-1 25 domain occupies 4761-4814 (CPTLGPWSAWSNCSAPCGGGTTKRHRSCKEGPGVTPCQAQDMEQQQDCNLQPCP). Intrachain disulfides connect C4773-C4808, C4777-C4813, and C4788-C4797. The region spanning 4816 to 4870 (CPPGQVLSACAVSCPRLCSHLQPGTPCMQEPCQLGCDCPRGQLLHNGTCVPPAEC) is the TIL 11 domain. Residues N4861, N4901, N4947, and N4954 are each glycosylated (N-linked (GlcNAc...) asparagine). The VWFC 3 domain maps to 4983 to 5041 (CECWHHGRPHPPGSEWQKACESCRCVSGESICTQHCPPLTCAQGETAVQEPGGCCPTCR). 4 disulfide bridges follow: C5052-C5100, C5066-C5117, C5076-C5133, and C5080-C5135. One can recognise a CTCK domain in the interval 5052–5139 (CRHLTELRNL…IHSCQCSACQ (88 aa)). N5060 carries N-linked (GlcNAc...) asparagine glycosylation.

The protein belongs to the thrombospondin family. Subcommissural organ. Located at the boundary of the diencephalon and mesencephalon beneath the posterior commissure at the point where the axons cross the midline.

The protein localises to the secreted. Its subcellular location is the extracellular space. In terms of biological role, involved in the modulation of neuronal aggregation. May be involved in developmental events during the formation of the central nervous system. The sequence is that of SCO-spondin (SSPO) from Bos taurus (Bovine).